The chain runs to 442 residues: Histidine--tRNA ligase (442 aa).

This sequence belongs to the class-II aminoacyl-tRNA synthetase family. As to quaternary structure, homodimer.

The protein localises to the cytoplasm. It carries out the reaction tRNA(His) + L-histidine + ATP = L-histidyl-tRNA(His) + AMP + diphosphate + H(+). The polypeptide is Histidine--tRNA ligase (hisS) (Treponema pallidum (strain Nichols)).